The primary structure comprises 760 residues: Colleterpenol synthase (760 aa).

The tract at residues 14 to 335 is terpene cyclase; it reads ASSGLRSKFR…YTRRYPSKAD (322 aa). Asp95 is a Mg(2+) binding site. Residues 95 to 99 carry the DDXXD 1 motif; sequence DDYYD. The NSE/DTE signature appears at 233–241; it reads NDLYSWPKE. The interval 336 to 759 is prenyltransferase; sequence LRQPEVEFVD…LELVLRRLWI (424 aa). The tract at residues 359 to 400 is disordered; that stretch reads EEKVVSESVESLPTTEVEDEFSSSDASPGSVDQAISTPPSTT. The span at 391 to 400 shows a compositional bias: polar residues; that stretch reads QAISTPPSTT. The isopentenyl diphosphate site is built by Lys477, Arg480, and His509. Mg(2+) is bound by residues Asp516 and Asp520. The DDXXD 2 motif lies at 516–520; sequence DDIED. Arg525 lines the dimethylallyl diphosphate pocket. Isopentenyl diphosphate is bound at residue Arg526. Dimethylallyl diphosphate contacts are provided by Lys605, Thr606, Gln643, Asn650, Lys660, and Lys670.

This sequence in the N-terminal section; belongs to the terpene synthase family. It in the C-terminal section; belongs to the FPP/GGPP synthase family. As to quaternary structure, hexamer. The cofactor is Mg(2+).

The enzyme catalyses 5 isopentenyl diphosphate + dimethylallyl diphosphate = all-trans-hexaprenyl diphosphate + 5 diphosphate. The catalysed reaction is all-trans-hexaprenyl diphosphate + H2O = colleterpenol + diphosphate. In terms of biological role, bifunctional terpene synthase that converts dimethylallyl diphosphate (DMAPP) and isopentenyl diphosphate (IPP) into colleterpenol as a single product. The C-terminal prenyltransferase (PT) domain of CgCS catalyzes formation of hexaprenyl diphosphate (HexPP), whereas the N-terminal terpene cyclase (TC) domain catalyzes the cyclization of HexPP to colleterpenol. This chain is Colleterpenol synthase, found in Colletotrichum gloeosporioides (Anthracnose fungus).